A 749-amino-acid polypeptide reads, in one-letter code: G-type lectin S-receptor-like serine/threonine-protein kinase At1g61460 (749 aa).

The N-terminal stretch at 1-25 is a signal peptide; the sequence is MRITFFASLLLFTNTIFISFSFAIA. One can recognise a Bulb-type lectin domain in the interval 26–145; that stretch reads GINKESPLSI…FSGRTLWQSF (120 aa). At 26–392 the chain is on the extracellular side; it reads GINKESPLSI…ELGGNKRKKT (367 aa). N54, N95, N118, and N135 each carry an N-linked (GlcNAc...) asparagine glycan. Residues 247-280 form the EGF-like; atypical domain; that stretch reads PAHSCDYYGVCGPFGICVKSVCKCFKGFIPKYIE. 2 cysteine pairs are disulfide-bonded: C251-C263 and C257-C268. Residues N286, N302, and N341 are each glycosylated (N-linked (GlcNAc...) asparagine). Positions 299–381 constitute a PAN domain; that stretch reads CQENSTKKDA…GEILSIRLAR (83 aa). 2 cysteine pairs are disulfide-bonded: C334-C355 and C338-C344. The helical transmembrane segment at 393-413 threads the bilayer; that stretch reads ITASIVSLSLFLILGSTAFGF. Residues 414–749 lie on the Cytoplasmic side of the membrane; the sequence is WRYRVKHNAS…EMTKSVILGR (336 aa). Residues 454-721 form the Protein kinase domain; that stretch reads FSLSNKLGQG…DLPSPKQPTF (268 aa). ATP is bound by residues 460-468 and K482; that span reads LGQGGFGSV. The tract at residues 543-560 is caM-binding; the sequence is RKRLEIDWPKRFDIIQGI. D579 (proton acceptor) is an active-site residue.

This sequence belongs to the protein kinase superfamily. Ser/Thr protein kinase family.

Its subcellular location is the cell membrane. It catalyses the reaction L-seryl-[protein] + ATP = O-phospho-L-seryl-[protein] + ADP + H(+). The catalysed reaction is L-threonyl-[protein] + ATP = O-phospho-L-threonyl-[protein] + ADP + H(+). The polypeptide is G-type lectin S-receptor-like serine/threonine-protein kinase At1g61460 (Arabidopsis thaliana (Mouse-ear cress)).